The primary structure comprises 243 residues: Adenylate dimethylallyltransferase (243 aa).

It catalyses the reaction dimethylallyl diphosphate + AMP = N(6)-(dimethylallyl)adenosine 5'-phosphate + diphosphate. In terms of biological role, transfers dimethylallyl groups to AMP as part of the biosynthesis of cytokinin phytohormones. This Agrobacterium tumefaciens (strain T37) protein is Adenylate dimethylallyltransferase (tzs).